A 337-amino-acid polypeptide reads, in one-letter code: D-alanine--D-alanine ligase (337 aa).

An ATP-grasp domain is found at Lys126–Ser326. Val152–Thr207 provides a ligand contact to ATP. Mg(2+)-binding residues include Asp279, Glu293, and Asn295.

Belongs to the D-alanine--D-alanine ligase family. Requires Mg(2+) as cofactor. It depends on Mn(2+) as a cofactor.

It is found in the cytoplasm. It catalyses the reaction 2 D-alanine + ATP = D-alanyl-D-alanine + ADP + phosphate + H(+). Its pathway is cell wall biogenesis; peptidoglycan biosynthesis. In terms of biological role, cell wall formation. The sequence is that of D-alanine--D-alanine ligase from Polynucleobacter asymbioticus (strain DSM 18221 / CIP 109841 / QLW-P1DMWA-1) (Polynucleobacter necessarius subsp. asymbioticus).